An 814-amino-acid chain; its full sequence is DNA gyrase subunit A (814 aa).

One can recognise a Topo IIA-type catalytic domain in the interval 32–499; the sequence is LPDVRDGLKP…GVIEFREEDL (468 aa). Tyrosine 120 acts as the O-(5'-phospho-DNA)-tyrosine intermediate in catalysis. The GyrA-box motif lies at 526 to 532; that stretch reads QHRAGRG.

Belongs to the type II topoisomerase GyrA/ParC subunit family. As to quaternary structure, heterotetramer, composed of two GyrA and two GyrB chains. In the heterotetramer, GyrA contains the active site tyrosine that forms a transient covalent intermediate with DNA, while GyrB binds cofactors and catalyzes ATP hydrolysis.

It is found in the cytoplasm. It carries out the reaction ATP-dependent breakage, passage and rejoining of double-stranded DNA.. In terms of biological role, a type II topoisomerase that negatively supercoils closed circular double-stranded (ds) DNA in an ATP-dependent manner to modulate DNA topology and maintain chromosomes in an underwound state. Negative supercoiling favors strand separation, and DNA replication, transcription, recombination and repair, all of which involve strand separation. Also able to catalyze the interconversion of other topological isomers of dsDNA rings, including catenanes and knotted rings. Type II topoisomerases break and join 2 DNA strands simultaneously in an ATP-dependent manner. The sequence is that of DNA gyrase subunit A from Dehalogenimonas lykanthroporepellens (strain ATCC BAA-1523 / JCM 15061 / BL-DC-9).